Here is a 180-residue protein sequence, read N- to C-terminus: UDP-4-amino-4,6-dideoxy-N-acetyl-beta-L-altrosamine N-acetyltransferase (180 aa).

Residues 13 to 169 (IDFTNLNDGE…IDVLLYYKDK (157 aa)) form the N-acetyltransferase domain.

It catalyses the reaction UDP-4-amino-4,6-dideoxy-N-acetyl-beta-L-altrosamine + acetyl-CoA = UDP-2,4-diacetamido-2,4,6-trideoxy-beta-L-altrose + CoA + H(+). Functionally, catalyzes the third step in the biosynthesis of pseudaminic acid, a sialic-acid-like sugar that is used to modify flagellin. Mediates N-4 acetylation of UDP-4-amino-4,6-dideoxy-beta-L-AltNAc to form UDP-2,4-diacetamido-2,4,6-trideoxy-beta-L-altropyranose. The protein is UDP-4-amino-4,6-dideoxy-N-acetyl-beta-L-altrosamine N-acetyltransferase (pseH) of Helicobacter pylori (strain ATCC 700392 / 26695) (Campylobacter pylori).